The sequence spans 733 residues: Catalase-peroxidase (733 aa).

The segment at 1 to 24 is disordered; the sequence is MTDDSTCPVTGGADKQVTGRGQSY. Residues 96–219 constitute a cross-link (tryptophyl-tyrosyl-methioninium (Trp-Tyr) (with M-245)); the sequence is WHSAGTYRTL…LAAVQMGLIY (124 aa). Catalysis depends on His97, which acts as the Proton acceptor. Residues 219–245 constitute a cross-link (tryptophyl-tyrosyl-methioninium (Tyr-Met) (with W-96)); that stretch reads YVNPEGPNGKPDPVAAAKDIRETFARM. His260 contributes to the heme b binding site.

It belongs to the peroxidase family. Peroxidase/catalase subfamily. As to quaternary structure, homodimer or homotetramer. Heme b serves as cofactor. In terms of processing, formation of the three residue Trp-Tyr-Met cross-link is important for the catalase, but not the peroxidase activity of the enzyme.

The catalysed reaction is H2O2 + AH2 = A + 2 H2O. It catalyses the reaction 2 H2O2 = O2 + 2 H2O. In terms of biological role, bifunctional enzyme with both catalase and broad-spectrum peroxidase activity. This is Catalase-peroxidase from Methanoregula boonei (strain DSM 21154 / JCM 14090 / 6A8).